Reading from the N-terminus, the 224-residue chain is MTSPIYLAIDTPHLDAALTLAQKVRHHVGGLKLGLEFFCANGHHGVHEMAKLGLPIFLDLKLHDIPNTVAKAIQALRPLEPAILTVHAAGGRAMLEEAKAVAGKDTRVIAVTVLTSLDAPDLEDIGLTGTPHDQVVRLAALAREAGLDGIVCSGQEVKSARKAWPGGFFVVPGVRPANGRIGDQKRIVTPAQAMSDGASILVVGRPITQSSDPDLAAREIEATL.

Substrate contacts are provided by residues Asp-10, Lys-32, 59–68 (DLKLHDIPNT), Thr-115, Arg-175, Gln-184, Gly-204, and Arg-205. Lys-61 acts as the Proton donor in catalysis.

It belongs to the OMP decarboxylase family. Type 1 subfamily. As to quaternary structure, homodimer.

The catalysed reaction is orotidine 5'-phosphate + H(+) = UMP + CO2. It functions in the pathway pyrimidine metabolism; UMP biosynthesis via de novo pathway; UMP from orotate: step 2/2. Functionally, catalyzes the decarboxylation of orotidine 5'-monophosphate (OMP) to uridine 5'-monophosphate (UMP). This chain is Orotidine 5'-phosphate decarboxylase, found in Sphingopyxis alaskensis (strain DSM 13593 / LMG 18877 / RB2256) (Sphingomonas alaskensis).